A 186-amino-acid polypeptide reads, in one-letter code: ATP-dependent protease subunit HslV (186 aa).

Thr-13 is an active-site residue. The Na(+) site is built by Ala-167, Cys-170, and Thr-173.

Belongs to the peptidase T1B family. HslV subfamily. A double ring-shaped homohexamer of HslV is capped on each side by a ring-shaped HslU homohexamer. The assembly of the HslU/HslV complex is dependent on binding of ATP.

It is found in the cytoplasm. The enzyme catalyses ATP-dependent cleavage of peptide bonds with broad specificity.. With respect to regulation, allosterically activated by HslU binding. Functionally, protease subunit of a proteasome-like degradation complex believed to be a general protein degrading machinery. This Allorhizobium ampelinum (strain ATCC BAA-846 / DSM 112012 / S4) (Agrobacterium vitis (strain S4)) protein is ATP-dependent protease subunit HslV.